Here is a 364-residue protein sequence, read N- to C-terminus: Dihydroorotate dehydrogenase (quinone) (364 aa).

Residues 61 to 65 (AGYDK) and T85 each bind FMN. K65 lines the substrate pocket. A substrate-binding site is contributed by 110-114 (NRLGF). FMN is bound by residues N139 and N170. N170 is a substrate binding site. The active-site Nucleophile is the S173. Substrate is bound at residue N175. K215 and S243 together coordinate FMN. 244–245 (NT) is a substrate binding site. Residues G266, G295, and 316–317 (YT) contribute to the FMN site.

Belongs to the dihydroorotate dehydrogenase family. Type 2 subfamily. Monomer. Requires FMN as cofactor.

Its subcellular location is the cell membrane. The enzyme catalyses (S)-dihydroorotate + a quinone = orotate + a quinol. The protein operates within pyrimidine metabolism; UMP biosynthesis via de novo pathway; orotate from (S)-dihydroorotate (quinone route): step 1/1. Functionally, catalyzes the conversion of dihydroorotate to orotate with quinone as electron acceptor. In Brucella abortus (strain S19), this protein is Dihydroorotate dehydrogenase (quinone).